We begin with the raw amino-acid sequence, 905 residues long: Probable coatomer subunit gamma (905 aa).

HEAT repeat units follow at residues 265 to 302 (TQFRDQMVPFLHGWLKSKGDMVNLEVARNMVRLKNISD), 303 to 340 (DDLQPVVSVLKIFLSSHRSATRFSAIRTLNELAMTRPH), 374 to 412 (DESVDRLMKQIVTFMSDISDNFKIIVVDAIRSLCLKFPR), 414 to 450 (QDSMLTFLSNILCDEGGYEFKRAAVDAISDMIKYIPE), and 525 to 563 (KFVQRSVKVILTRCLEDADDEVRDRAAFSVKALEDRDAF). Ser-604 is modified (phosphoserine).

It belongs to the COPG family. As to quaternary structure, oligomeric complex that consists of at least the alpha, beta, beta', gamma, delta, epsilon and zeta subunits.

It is found in the cytoplasm. Its subcellular location is the golgi apparatus membrane. It localises to the cytoplasmic vesicle. The protein localises to the COPI-coated vesicle membrane. The coatomer is a cytosolic protein complex that binds to dilysine motifs and reversibly associates with Golgi non-clathrin-coated vesicles, which further mediate biosynthetic protein transport from the ER, via the Golgi up to the trans Golgi network. Coatomer complex is required for budding from Golgi membranes, and is essential for the retrograde Golgi-to-ER transport of dilysine-tagged proteins. This Schizosaccharomyces pombe (strain 972 / ATCC 24843) (Fission yeast) protein is Probable coatomer subunit gamma (sec21).